The following is a 397-amino-acid chain: Beta sliding clamp (397 aa).

Belongs to the beta sliding clamp family. In terms of assembly, forms a ring-shaped head-to-tail homodimer around DNA which binds and tethers DNA polymerases and other proteins to the DNA. The DNA replisome complex has a single clamp-loading complex (3 tau and 1 each of delta, delta', psi and chi subunits) which binds 3 Pol III cores (1 core on the leading strand and 2 on the lagging strand) each with a beta sliding clamp dimer. Additional proteins in the replisome are other copies of gamma, psi and chi, Ssb, DNA helicase and RNA primase.

Its subcellular location is the cytoplasm. Functionally, confers DNA tethering and processivity to DNA polymerases and other proteins. Acts as a clamp, forming a ring around DNA (a reaction catalyzed by the clamp-loading complex) which diffuses in an ATP-independent manner freely and bidirectionally along dsDNA. Initially characterized for its ability to contact the catalytic subunit of DNA polymerase III (Pol III), a complex, multichain enzyme responsible for most of the replicative synthesis in bacteria; Pol III exhibits 3'-5' exonuclease proofreading activity. The beta chain is required for initiation of replication as well as for processivity of DNA replication. The polypeptide is Beta sliding clamp (dnaN) (Mycolicibacterium smegmatis (strain ATCC 700084 / mc(2)155) (Mycobacterium smegmatis)).